The chain runs to 393 residues: Elongation factor Tu (393 aa).

The tr-type G domain occupies 10-203 (KPHVNIGTIG…AVDDYIPEPV (194 aa)). Residues 19–26 (GHVDHGKT) are G1. 19-26 (GHVDHGKT) lines the GTP pocket. Thr26 serves as a coordination point for Mg(2+). The tract at residues 60–64 (GITIS) is G2. Residues 81–84 (DCPG) form a G3 region. GTP-binding positions include 81–85 (DCPGH) and 136–139 (NKVD). Residues 136–139 (NKVD) are G4. Residues 173 to 175 (SAL) form a G5 region.

This sequence belongs to the TRAFAC class translation factor GTPase superfamily. Classic translation factor GTPase family. EF-Tu/EF-1A subfamily. Monomer.

Its subcellular location is the cytoplasm. It catalyses the reaction GTP + H2O = GDP + phosphate + H(+). Its function is as follows. GTP hydrolase that promotes the GTP-dependent binding of aminoacyl-tRNA to the A-site of ribosomes during protein biosynthesis. The protein is Elongation factor Tu of Chlorobaculum parvum (strain DSM 263 / NCIMB 8327) (Chlorobium vibrioforme subsp. thiosulfatophilum).